A 261-amino-acid polypeptide reads, in one-letter code: RING-H2 finger protein ATL58 (261 aa).

Residues 25–45 traverse the membrane as a helical segment; the sequence is AFIFSVPICFTFIILFLFYLI. The RING-type; atypical zinc finger occupies 100-142; that stretch reads CSVCLGDYQPNDKLQQIPVCKHTFHMDCIDLWLTSHTTCPLCR. Disordered stretches follow at residues 149–227 and 241–261; these read RSRQ…NDGH and MEED…CRTG. Over residues 194–221 the composition is skewed to polar residues; that stretch reads SGVSSQPESQPVVNHRGVSSQPESQPVN.

The protein belongs to the RING-type zinc finger family. ATL subfamily.

The protein resides in the membrane. The enzyme catalyses S-ubiquitinyl-[E2 ubiquitin-conjugating enzyme]-L-cysteine + [acceptor protein]-L-lysine = [E2 ubiquitin-conjugating enzyme]-L-cysteine + N(6)-ubiquitinyl-[acceptor protein]-L-lysine.. It participates in protein modification; protein ubiquitination. The protein is RING-H2 finger protein ATL58 (ATL58) of Arabidopsis thaliana (Mouse-ear cress).